Reading from the N-terminus, the 477-residue chain is Glutamate--tRNA ligase (477 aa).

The 'HIGH' region motif lies at Pro12–Gly22. Zn(2+) is bound by residues Cys106, Cys108, Cys128, and Asp130. The 'KMSKS' region signature appears at Lys238–Arg242. Lys241 contributes to the ATP binding site.

Belongs to the class-I aminoacyl-tRNA synthetase family. Glutamate--tRNA ligase type 1 subfamily. In terms of assembly, monomer. The cofactor is Zn(2+).

The protein localises to the cytoplasm. The catalysed reaction is tRNA(Glu) + L-glutamate + ATP = L-glutamyl-tRNA(Glu) + AMP + diphosphate. Functionally, catalyzes the attachment of glutamate to tRNA(Glu) in a two-step reaction: glutamate is first activated by ATP to form Glu-AMP and then transferred to the acceptor end of tRNA(Glu). In Thermobifida fusca (strain YX), this protein is Glutamate--tRNA ligase.